Reading from the N-terminus, the 877-residue chain is DNA polymerase I (877 aa).

The 5'-3' exonuclease domain maps to 180–270 (TPAQFIDLKA…EIGLDDTLLK (91 aa)). Residues 308 to 468 (DEIDFEIVTD…AKEKMMAELL (161 aa)) form the 3'-5' exonuclease domain.

Belongs to the DNA polymerase type-A family. In terms of assembly, single-chain monomer with multiple functions.

It carries out the reaction DNA(n) + a 2'-deoxyribonucleoside 5'-triphosphate = DNA(n+1) + diphosphate. Functionally, in addition to polymerase activity, this DNA polymerase exhibits 3'-5' and 5'-3' exonuclease activity. The protein is DNA polymerase I (polA) of Lactococcus lactis subsp. lactis (strain IL1403) (Streptococcus lactis).